Reading from the N-terminus, the 625-residue chain is Dopamine beta-hydroxylase (625 aa).

The Cytoplasmic portion of the chain corresponds to 1–9 (MQVPSPSAR). Residues 10–30 (EAASMYGTAVAVFLVLLVAVL) traverse the membrane as a helical; Signal-anchor for type II membrane protein segment. The Intragranular portion of the chain corresponds to 31–625 (QGLAPPESPL…TVVNIGGGKV (595 aa)). The 117-residue stretch at 50-166 (GDLELSWDVS…GTVHLVYGVL (117 aa)) folds into the DOMON domain. Cystine bridges form between cysteine 147/cysteine 604, cysteine 224/cysteine 275, cysteine 261/cysteine 287, cysteine 382/cysteine 495, cysteine 386/cysteine 573, and cysteine 458/cysteine 480. An N-linked (GlcNAc...) asparagine glycan is attached at asparagine 177. The active site involves tyrosine 222. Residues histidine 254 and histidine 255 each coordinate Cu(2+). Asparagine 315 carries an N-linked (GlcNAc...) asparagine glycan. Cu(2+) contacts are provided by histidine 325, histidine 404, histidine 406, and methionine 479. Histidine 404 is a catalytic residue. N-linked (GlcNAc...) asparagine glycosylation occurs at asparagine 574.

The protein belongs to the copper type II ascorbate-dependent monooxygenase family. As to quaternary structure, homotetramer; composed of two disulfide-linked dimers. Requires Cu(2+) as cofactor. Post-translationally, proteolytic cleavage after the membrane-anchor leads to the release of the soluble form. In terms of processing, N-glycosylated.

The protein resides in the cytoplasmic vesicle. It is found in the secretory vesicle lumen. It localises to the secretory vesicle. Its subcellular location is the chromaffin granule lumen. The protein localises to the secreted. The protein resides in the secretory vesicle membrane. It is found in the chromaffin granule membrane. It carries out the reaction dopamine + 2 L-ascorbate + O2 = (R)-noradrenaline + 2 monodehydro-L-ascorbate radical + H2O. It functions in the pathway catecholamine biosynthesis; (R)-noradrenaline biosynthesis; (R)-noradrenaline from dopamine: step 1/1. Catalyzes the hydroxylation of dopamine to noradrenaline (also known as norepinephrine), and is thus vital for regulation of these neurotransmitters. This Canis lupus familiaris (Dog) protein is Dopamine beta-hydroxylase (DBH).